The chain runs to 207 residues: dITP/XTP pyrophosphatase (207 aa).

8–13 (TNNKNK) is a substrate binding site. D72 serves as the catalytic Proton acceptor. Residue D72 coordinates Mg(2+). Residues S73, 157–160 (FGYD), K180, and 185–186 (HR) each bind substrate.

It belongs to the HAM1 NTPase family. In terms of assembly, homodimer. The cofactor is Mg(2+).

The catalysed reaction is XTP + H2O = XMP + diphosphate + H(+). It carries out the reaction dITP + H2O = dIMP + diphosphate + H(+). The enzyme catalyses ITP + H2O = IMP + diphosphate + H(+). Pyrophosphatase that catalyzes the hydrolysis of nucleoside triphosphates to their monophosphate derivatives, with a high preference for the non-canonical purine nucleotides XTP (xanthosine triphosphate), dITP (deoxyinosine triphosphate) and ITP. Seems to function as a house-cleaning enzyme that removes non-canonical purine nucleotides from the nucleotide pool, thus preventing their incorporation into DNA/RNA and avoiding chromosomal lesions. This Lactobacillus johnsonii (strain CNCM I-12250 / La1 / NCC 533) protein is dITP/XTP pyrophosphatase.